Consider the following 847-residue polypeptide: Collagen alpha-1(I) chain (847 aa).

Residues 1 to 847 (GPMGPSGPRG…PGPIGPPGPR (847 aa)) are disordered. The span at 20-39 (PQGFQGPPGEPGEPGSSGPM) shows a compositional bias: low complexity. A compositionally biased stretch (basic and acidic residues) spans 51–65 (NGDDGEAGKPGRPGE). At Ser-85 the chain carries Phosphoserine. Composition is skewed to low complexity over residues 93-109 (DAGP…PGEN) and 127-145 (PGAS…TGAA). Pro residues predominate over residues 147 to 159 (PPGPTGPAGPPGF). 7 stretches are compositionally biased toward low complexity: residues 193–208 (AGAA…DGQP), 219–228 (QGPSGAPGPK), 298–314 (PKGI…DGKT), 334–343 (PGPKGAAGEP), 500–543 (PSGP…KGDA), 551–599 (PTGA…NAGA), and 628–638 (SPGADGPAGAP). A Phosphoserine modification is found at Ser-501. The segment covering 685–695 (PPGPMGPPGIA) has biased composition (pro residues). A compositionally biased stretch (low complexity) spans 697–712 (PPGESGREGSPGAEGS). The span at 731–746 (SGPPGAPGAPGAPGPV) shows a compositional bias: pro residues. Over residues 763–777 (AGPAGARGPSGPQGP) the composition is skewed to low complexity. A compositionally biased stretch (basic and acidic residues) spans 778-789 (RGDKGETGEQGD). Residues 793-838 (SGIQGPPGAPGSPGEQGPSGASGPAGPRGPPGSAGSPGKDGINGIP) are compositionally biased toward low complexity.

It belongs to the fibrillar collagen family. As to quaternary structure, trimers of one alpha 2(I) and two alpha 1(I) chains. Post-translationally, prolines at the third position of the tripeptide repeating unit (G-X-Y) are hydroxylated in some or all of the chains. As to expression, forms the fibrils of tendon, ligaments and bones. In bones, the fibrils are mineralized with calcium hydroxyapatite.

The protein localises to the secreted. It is found in the extracellular space. The protein resides in the extracellular matrix. Functionally, type I collagen is a member of group I collagen (fibrillar forming collagen). The protein is Collagen alpha-1(I) chain of Cyclopes didactylus (Silky anteater).